We begin with the raw amino-acid sequence, 310 residues long: Haloalkane dehalogenase (310 aa).

One can recognise an AB hydrolase-1 domain in the interval 30-140; it reads PVVLFLHGNP…PMPTWQDFHH (111 aa). The Nucleophile role is filled by D103. The Proton donor role is filled by E127. The Proton acceptor role is filled by H280.

Belongs to the haloalkane dehalogenase family. Type 2 subfamily. As to quaternary structure, monomer.

It carries out the reaction 1-haloalkane + H2O = a halide anion + a primary alcohol + H(+). Functionally, catalyzes hydrolytic cleavage of carbon-halogen bonds in halogenated aliphatic compounds, leading to the formation of the corresponding primary alcohols, halide ions and protons. The sequence is that of Haloalkane dehalogenase from Bradyrhizobium diazoefficiens (strain JCM 10833 / BCRC 13528 / IAM 13628 / NBRC 14792 / USDA 110).